The chain runs to 278 residues: Undecaprenyl-diphosphatase (278 aa).

The next 8 membrane-spanning stretches (helical) occupy residues 3-23 (YILIGVILGIVQGISEWIPIS), 42-62 (VAYSFGLFMEIGTIAAAIIYF), 88-108 (FLVIVTIITGLMGVPLYLFVI), 112-132 (ILGLPMTVLGVVLLIDGIIIY), 152-172 (IIIVGIAQGLAALPGVSRSGI), 190-210 (LSFISLIPAALGAIGVTVLFS), 225-245 (GLLISIVVATFVSIFFINALL), and 253-273 (VVVLVIILGIIAIISGILSGI).

The protein belongs to the UppP family.

The protein resides in the cell membrane. It carries out the reaction di-trans,octa-cis-undecaprenyl diphosphate + H2O = di-trans,octa-cis-undecaprenyl phosphate + phosphate + H(+). Functionally, catalyzes the dephosphorylation of undecaprenyl diphosphate (UPP). The chain is Undecaprenyl-diphosphatase from Saccharolobus islandicus (strain M.16.4 / Kamchatka #3) (Sulfolobus islandicus).